The sequence spans 775 residues: MSTISEVGPWELGLSLGSGGPNSSRLAKHRETGQLAVVKPIVGWSELTSSQQARIEGELVLLRLIEHPNVLQLIDVISAQEQLFVVVEYMPGGELFDCMLRKGSFTEQDTAKFLWQILCGLEYCHKLHICHRDLKPENLYLDAHGSIKIGEFGMASIQQPGKLLQTSCGSPHYASPEIIMGRSYDGCASDIWSCGIIFFALLTGKLPFDDDNIRSLLLKVCQGQFEMPSNISPQAQHLLYRMLDVDSSTRITMEQIREHPFLSCFVHPNISIPIISAPIQPIDPLIVQHLSLVFRCSDDPMPLYEKLASQSPLVEKTLYTLLSRHLHPPSSAAVDRNRAVVDDLLGTAASNGQQMDEEEIEQAINIPTLAPYPISYAAESVPRPATSASPFLTPVTTSGTFNYSFNATNPQSILQRPATTSSAVPQLPKSVTPGLAYPHDSSMLSSNYRPPSALSPRNFNVSINDPEVQLSRRATSLDMSNDFRMNENDPSIVGNLAASNFPTGMGPPRKRVTSRMSEHTGNRVVSFPRGSAFNPRVTRFNVGNEQFSNNIDNNNYNQPYANATMNNSRRLRTPSGERSMRADLSQSPASYDSLNVPKHRRRQSLFSPSSTKKKLSGSPFQPKRSFLRRLFSSEPSCKCVYASLVASELEHEILEVLRRWQLLGIGIADIIYDSVSASISARIKRQNSLNLKPVRFRISVLAEFFGSQAVFVLESGSSTTFDHLATEFQLIFEDKGFLDNLELSYFQASASRPVSRMSVSSSPFAVFRQRQSVQS.

A Protein kinase domain is found at 10–262 (WELGLSLGSG…MEQIREHPFL (253 aa)). ATP is bound by residues 16 to 24 (LGSGGPNSS) and K39. The Proton acceptor role is filled by D133. Residues S309, S311, and S476 each carry the phosphoserine modification. A compositionally biased stretch (low complexity) spans 549-563 (NNIDNNNYNQPYANA). The disordered stretch occupies residues 549 to 620 (NNIDNNNYNQ…TKKKLSGSPF (72 aa)). Residues 584-593 (LSQSPASYDS) are compositionally biased toward polar residues. 2 positions are modified to phosphoserine: S587 and S632.

It belongs to the protein kinase superfamily. CAMK Ser/Thr protein kinase family. NIM1 subfamily. In terms of assembly, interacts with blt1 and mid1. In terms of processing, autophosphorylated.

The catalysed reaction is L-seryl-[protein] + ATP = O-phospho-L-seryl-[protein] + ADP + H(+). It carries out the reaction L-threonyl-[protein] + ATP = O-phospho-L-threonyl-[protein] + ADP + H(+). In terms of biological role, acts as a mitotic inducer. In G2 it negatively regulates wee1, a mitotic inhibitor. Also has a role in cytokinesis where it required for proper septum formation. This chain is Mitosis inducer protein kinase cdr2 (cdr2), found in Schizosaccharomyces pombe (strain 972 / ATCC 24843) (Fission yeast).